Reading from the N-terminus, the 309-residue chain is Virulence regulon transcriptional activator VirB (309 aa).

The segment at residues 152 to 171 is a DNA-binding region (H-T-H motif); sequence KDIAKKENLSRAKVTRAFQA.

It belongs to the ParB family.

Its function is as follows. Transcription activator for the invasion antigens IpaB, IpaC and IpaD. VirB is itself regulated by VirF. The protein is Virulence regulon transcriptional activator VirB (virB) of Shigella flexneri.